The primary structure comprises 230 residues: Increased recombination centers protein 19 (230 aa).

The protein belongs to the IRC19 family.

Its function is as follows. Involved in sporulation and maintenance of the mitochondrial DNA. Is probably involved in a pathway contributing to genomic integrity. This Saccharomyces cerevisiae (strain JAY291) (Baker's yeast) protein is Increased recombination centers protein 19 (IRC19).